The sequence spans 431 residues: Peptidase B (431 aa).

Lys-196 and Asp-201 together coordinate Mn(2+). Lys-208 is a catalytic residue. Asp-219, Asp-278, and Glu-280 together coordinate Mn(2+). The active site involves Arg-282.

Belongs to the peptidase M17 family. As to quaternary structure, homohexamer. Mn(2+) serves as cofactor.

The protein localises to the cytoplasm. It carries out the reaction Release of an N-terminal amino acid, Xaa, from a peptide or arylamide. Xaa is preferably Glu or Asp but may be other amino acids, including Leu, Met, His, Cys and Gln.. Probably plays an important role in intracellular peptide degradation. The protein is Peptidase B of Photorhabdus laumondii subsp. laumondii (strain DSM 15139 / CIP 105565 / TT01) (Photorhabdus luminescens subsp. laumondii).